The following is a 682-amino-acid chain: Solute carrier organic anion transporter family member 2B1 (682 aa).

Residues Met1–Asp30 are disordered. Topologically, residues Met1 to Lys41 are cytoplasmic. Residues Glu13–Asp30 show a composition bias toward basic and acidic residues. Ser21 carries the post-translational modification Phosphoserine. A helical transmembrane segment spans residues Phe42 to Leu61. The Extracellular portion of the chain corresponds to Lys62–Gly80. A helical membrane pass occupies residues Leu81–Gly101. Topologically, residues Ser102–Pro107 are cytoplasmic. The helical transmembrane segment at Arg108–Glu132 threads the bilayer. At Pro133–His176 the chain is on the extracellular side. Asn165 carries N-linked (GlcNAc...) asparagine glycosylation. The helical transmembrane segment at Leu177–Asp206 threads the bilayer. Residues Asp207–Thr225 are Cytoplasmic-facing. A helical transmembrane segment spans residues Met226–Ile246. Topologically, residues Asp247–Val264 are extracellular. Asn255 is a glycosylation site (N-linked (GlcNAc...) asparagine). Residues Gly265 to Pro289 traverse the membrane as a helical segment. Over Arg290–Arg354 the chain is Cytoplasmic. Residues Ser311 and Ser314 each carry the phosphoserine modification. The chain crosses the membrane as a helical span at residues Thr355–Ala376. Residues Gly377–Phe396 lie on the Extracellular side of the membrane. Residues Ala397–Val420 traverse the membrane as a helical segment. Residues Lys421 to His424 lie on the Cytoplasmic side of the membrane. The chain crosses the membrane as a helical span at residues Leu425–Leu448. Residues Phe449–Phe552 lie on the Extracellular side of the membrane. One can recognise a Kazal-like domain in the interval Pro471–Ala531. 3 cysteine pairs are disulfide-bonded: Cys477–Cys508, Cys483–Cys504, and Cys492–Cys529. N-linked (GlcNAc...) asparagine glycosylation is found at Asn526 and Asn533. A helical membrane pass occupies residues Ile553–Leu575. Residues Arg576–Thr584 are Cytoplasmic-facing. A helical transmembrane segment spans residues Leu585–Ile610. The Extracellular portion of the chain corresponds to Asp611–Gln643. Residues Phe644–Leu661 traverse the membrane as a helical segment. Topologically, residues Arg662–Leu682 are cytoplasmic.

Belongs to the organo anion transporter (TC 2.A.60) family. In terms of tissue distribution, expressed in liver, kidney, heart, lung and retina. Widely distributed in all brain regions.

The protein resides in the cell membrane. The protein localises to the basal cell membrane. It is found in the apical cell membrane. The catalysed reaction is coproporphyrin III(out) = coproporphyrin III(in). The enzyme catalyses substance P(out) = substance P(in). It catalyses the reaction taurocholate(out) = taurocholate(in). It carries out the reaction prostaglandin E1(out) = prostaglandin E1(in). The catalysed reaction is prostaglandin E2(out) = prostaglandin E2(in). The enzyme catalyses prostaglandin D2(out) = prostaglandin D2(in). It catalyses the reaction leukotriene C4(out) = leukotriene C4(in). It carries out the reaction L-thyroxine(out) = L-thyroxine(in). Functionally, mediates the Na(+)-independent transport of organic anions such as taurocholate, the prostaglandins D2 (PGD2), E1 (PGE1) and E2 (PGE2), leukotriene C4, thromboxane B2 and L-thyroxine. Also plays a role in the reuptake of neuropeptides such as substance P/TAC1 and vasoactive intestinal peptide/VIP released from retinal neurons. May act as a heme transporter that promotes cellular iron availability. Also transports heme by-product coproporphyrin III (CPIII), and may be involved in their hepatic disposition. May contribute to regulate the transport of organic compounds in testis across the blood-testis-barrier. Shows a pH-sensitive substrate specificity which may be ascribed to the protonation state of the binding site and leads to a stimulation of substrate transport in an acidic microenvironment. The exact transport mechanism has not been yet deciphered but most likely involves an anion exchange, coupling the cellular uptake of organic substrate with the efflux of an anionic compound. Hydrogencarbonate/HCO3(-) acts as a probable counteranion that exchanges for organic anions. Cytoplasmic glutamate may also act as counteranion in the placenta. In Rattus norvegicus (Rat), this protein is Solute carrier organic anion transporter family member 2B1.